A 240-amino-acid polypeptide reads, in one-letter code: Phosphoribosylaminoimidazole-succinocarboxamide synthase (240 aa).

It belongs to the SAICAR synthetase family.

The enzyme catalyses 5-amino-1-(5-phospho-D-ribosyl)imidazole-4-carboxylate + L-aspartate + ATP = (2S)-2-[5-amino-1-(5-phospho-beta-D-ribosyl)imidazole-4-carboxamido]succinate + ADP + phosphate + 2 H(+). The protein operates within purine metabolism; IMP biosynthesis via de novo pathway; 5-amino-1-(5-phospho-D-ribosyl)imidazole-4-carboxamide from 5-amino-1-(5-phospho-D-ribosyl)imidazole-4-carboxylate: step 1/2. The sequence is that of Phosphoribosylaminoimidazole-succinocarboxamide synthase from Neorickettsia sennetsu (strain ATCC VR-367 / Miyayama) (Ehrlichia sennetsu).